The chain runs to 203 residues: Holliday junction branch migration complex subunit RuvA (203 aa).

Positions 1-63 (MIGKLSGKID…EEHIHLYGFL (63 aa)) are domain I. A domain II region spans residues 64 to 142 (TLEEKNFFNL…KISSGSVIIK (79 aa)). The tract at residues 143 to 149 (DSLNIKN) is flexible linker. The interval 150-203 (ITPVASNEVIKALVNLGFSRFEAQNAVQGIIIQNPEISIDELIKTALKNRNAGL) is domain III.

It belongs to the RuvA family. In terms of assembly, homotetramer. Forms an RuvA(8)-RuvB(12)-Holliday junction (HJ) complex. HJ DNA is sandwiched between 2 RuvA tetramers; dsDNA enters through RuvA and exits via RuvB. An RuvB hexamer assembles on each DNA strand where it exits the tetramer. Each RuvB hexamer is contacted by two RuvA subunits (via domain III) on 2 adjacent RuvB subunits; this complex drives branch migration. In the full resolvosome a probable DNA-RuvA(4)-RuvB(12)-RuvC(2) complex forms which resolves the HJ.

The protein resides in the cytoplasm. Its function is as follows. The RuvA-RuvB-RuvC complex processes Holliday junction (HJ) DNA during genetic recombination and DNA repair, while the RuvA-RuvB complex plays an important role in the rescue of blocked DNA replication forks via replication fork reversal (RFR). RuvA specifically binds to HJ cruciform DNA, conferring on it an open structure. The RuvB hexamer acts as an ATP-dependent pump, pulling dsDNA into and through the RuvAB complex. HJ branch migration allows RuvC to scan DNA until it finds its consensus sequence, where it cleaves and resolves the cruciform DNA. The protein is Holliday junction branch migration complex subunit RuvA of Rickettsia felis (strain ATCC VR-1525 / URRWXCal2) (Rickettsia azadi).